Here is a 386-residue protein sequence, read N- to C-terminus: Bifunctional enzyme IspD/IspF (386 aa).

Residues 1 to 230 (MNSVPSLPGQ…LEEQSMSVIP (230 aa)) are 2-C-methyl-D-erythritol 4-phosphate cytidylyltransferase. The tract at residues 231 to 386 (RTGMGFDVHR…AQAVATVVSG (156 aa)) is 2-C-methyl-D-erythritol 2,4-cyclodiphosphate synthase. Residues D237 and H239 each coordinate a divalent metal cation. Residues 237–239 (DVH) and 263–264 (HS) contribute to the 4-CDP-2-C-methyl-D-erythritol 2-phosphate site. Residue H271 participates in a divalent metal cation binding. Residues 285–287 (DIG), 361–364 (TTTE), and R371 each bind 4-CDP-2-C-methyl-D-erythritol 2-phosphate.

This sequence in the N-terminal section; belongs to the IspD/TarI cytidylyltransferase family. IspD subfamily. It in the C-terminal section; belongs to the IspF family. The cofactor is a divalent metal cation.

The catalysed reaction is 2-C-methyl-D-erythritol 4-phosphate + CTP + H(+) = 4-CDP-2-C-methyl-D-erythritol + diphosphate. It catalyses the reaction 4-CDP-2-C-methyl-D-erythritol 2-phosphate = 2-C-methyl-D-erythritol 2,4-cyclic diphosphate + CMP. It functions in the pathway isoprenoid biosynthesis; isopentenyl diphosphate biosynthesis via DXP pathway; isopentenyl diphosphate from 1-deoxy-D-xylulose 5-phosphate: step 2/6. Its pathway is isoprenoid biosynthesis; isopentenyl diphosphate biosynthesis via DXP pathway; isopentenyl diphosphate from 1-deoxy-D-xylulose 5-phosphate: step 4/6. Functionally, bifunctional enzyme that catalyzes the formation of 4-diphosphocytidyl-2-C-methyl-D-erythritol from CTP and 2-C-methyl-D-erythritol 4-phosphate (MEP) (IspD), and catalyzes the conversion of 4-diphosphocytidyl-2-C-methyl-D-erythritol 2-phosphate (CDP-ME2P) to 2-C-methyl-D-erythritol 2,4-cyclodiphosphate (ME-CPP) with a corresponding release of cytidine 5-monophosphate (CMP) (IspF). The sequence is that of Bifunctional enzyme IspD/IspF from Novosphingobium aromaticivorans (strain ATCC 700278 / DSM 12444 / CCUG 56034 / CIP 105152 / NBRC 16084 / F199).